We begin with the raw amino-acid sequence, 467 residues long: Serine/threonine-protein phosphatase 2A 56 kDa regulatory subunit epsilon isoform (467 aa).

Positions 1 to 40 are disordered; it reads MSSAPTTPPSVDKVDGFSRKSVRKARQKRSQSSSQFRSQG. Ser2 bears the N-acetylserine mark. The residue at position 7 (Thr7) is a Phosphothreonine. The segment covering 20–29 has biased composition (basic residues); sequence KSVRKARQKR. Ser30, Ser32, and Ser34 each carry phosphoserine. The span at 30-40 shows a compositional bias: low complexity; it reads SQSSSQFRSQG.

It belongs to the phosphatase 2A regulatory subunit B56 family. Found in a complex with at least ARL2, PPP2CB; PPP2R1A, PPP2R2A, PPP2R5E and TBCD. PP2A consists of a common heterodimeric core enzyme, composed of a 36 kDa catalytic subunit (subunit C) and a 65 kDa constant regulatory subunit (PR65 or subunit A), that associates with a variety of regulatory subunits. Proteins that associate with the core dimer include three families of regulatory subunits B (the R2/B/PR55/B55, R3/B''/PR72/PR130/PR59 and R5/B'/B56 families), the 48 kDa variable regulatory subunit, viral proteins, and cell signaling molecules. Interacts with SGO1. In terms of processing, phosphorylated on serine residues.

It localises to the cytoplasm. Functionally, the B regulatory subunit might modulate substrate selectivity and catalytic activity, and might also direct the localization of the catalytic enzyme to a particular subcellular compartment. The protein is Serine/threonine-protein phosphatase 2A 56 kDa regulatory subunit epsilon isoform (PPP2R5E) of Homo sapiens (Human).